The following is a 145-amino-acid chain: Ribosome-binding factor A (145 aa).

The interval 126–145 (RDLDTETDAEAGSETTKEED) is disordered. The span at 130–145 (TETDAEAGSETTKEED) shows a compositional bias: acidic residues.

This sequence belongs to the RbfA family. Monomer. Binds 30S ribosomal subunits, but not 50S ribosomal subunits or 70S ribosomes.

The protein localises to the cytoplasm. Its function is as follows. One of several proteins that assist in the late maturation steps of the functional core of the 30S ribosomal subunit. Associates with free 30S ribosomal subunits (but not with 30S subunits that are part of 70S ribosomes or polysomes). Required for efficient processing of 16S rRNA. May interact with the 5'-terminal helix region of 16S rRNA. The sequence is that of Ribosome-binding factor A from Azorhizobium caulinodans (strain ATCC 43989 / DSM 5975 / JCM 20966 / LMG 6465 / NBRC 14845 / NCIMB 13405 / ORS 571).